The sequence spans 496 residues: Apulose kinase (496 aa).

ATP-binding positions include 13–15, threonine 267, glycine 308, and 408–412; these read TTN and GATQN.

This sequence belongs to the FGGY kinase family.

The enzyme catalyses apulose + ATP = apulose 4-phosphate + ADP + H(+). Its pathway is carbohydrate metabolism. Functionally, involved in catabolism of D-apiose. Catalyzes phosphorylation of apulose to form apulose 4-phosphate. The chain is Apulose kinase from Pectobacterium atrosepticum (strain SCRI 1043 / ATCC BAA-672) (Erwinia carotovora subsp. atroseptica).